The primary structure comprises 303 residues: N-acetyl-D-glucosamine kinase (303 aa).

ATP is bound by residues 4–11 and 133–140; these read GFDVGGTK and GFGGGLVF. Zn(2+) contacts are provided by histidine 157, cysteine 177, cysteine 179, and cysteine 184.

The protein belongs to the ROK (NagC/XylR) family. NagK subfamily.

The catalysed reaction is N-acetyl-D-glucosamine + ATP = N-acetyl-D-glucosamine 6-phosphate + ADP + H(+). It participates in cell wall biogenesis; peptidoglycan recycling. In terms of biological role, catalyzes the phosphorylation of N-acetyl-D-glucosamine (GlcNAc) derived from cell-wall degradation, yielding GlcNAc-6-P. This Photobacterium profundum (strain SS9) protein is N-acetyl-D-glucosamine kinase.